A 717-amino-acid chain; its full sequence is SUN domain-containing protein 2 (717 aa).

Residues 1–66 (MSRRSQRLTR…PQLGPSSDAH (66 aa)) form a disordered region. Residues 1–139 (MSRRSQRLTR…SSSGYSSEDD (139 aa)) form an LMNA-binding region. Residues 1–212 (MSRRSQRLTR…LTRRFSSLKT (212 aa)) are Nuclear-facing. The residue at position 12 (Ser12) is a Phosphoserine. The span at 19–32 (SSSSGGSSVAGSQS) shows a compositional bias: low complexity. Ser38 and Ser54 each carry phosphoserine. Position 107 is a phosphothreonine (Thr107). Residues Ser110, Ser113, Ser116, and Ser136 each carry the phosphoserine modification. A helical membrane pass occupies residues 213-233 (FLWFLLPLLLLTCLTYGAWYF). The Perinuclear space segment spans residues 234 to 717 (YPYGLQTFHP…RFRVHGEPAH (484 aa)). Coiled coils occupy residues 273 to 296 (EQRVMSRVHSLERRLEALAAEFSS), 348 to 440 (RRET…EEVG), and 475 to 506 (LLQREEMQAQLRELESKILTHVAEMQGKSARE). Positions 507–717 (AAASLSLTLQ…RFRVHGEPAH (211 aa)) are sufficient for interaction with SYNE1 and SYNE2. In terms of domain architecture, SUN spans 555 to 716 (GASVISTRCS…YRFRVHGEPA (162 aa)). Cys601 and Cys705 are oxidised to a cystine. N-linked (GlcNAc...) asparagine glycosylation is present at Asn636.

As to quaternary structure, core component of the LINC complex which is composed of inner nuclear membrane SUN domain-containing proteins coupled to outer nuclear membrane KASH domain-containing nesprins. SUN and KASH domain-containing proteins seem to bind each other promiscuously; however, differentially expression of LINC complex constituents is giving rise to specific assemblies. At least SUN1/2-containing core LINC complexes are proposed to be hexameric composed of three protomers of each KASH and SUN domain-containing protein. Interacts with SYNE2; the SUN2:SYNE2/KASH2 LINC complex is a heterohexamer; the homotrimeric cloverleave-like conformation of the SUN domain is a prerequisite for LINC complex formation in which three separate SYNE2/KASH2 peptides bind at the interface of adjacent SUN domains. Component of a probable SUN2:KASH5 LINC complex. Interacts with SYNE1 and SYNE3; probably forming respective LINC complexes. Interacts with A-type lamin. Interaction with lamins B1 and C is hardly detectable. Interacts with EMD and RAB5A. Interacts with TMEM43. Interacts with TMEM201. In terms of processing, the disulfide bond with SYNE2 is required for stability of the SUN2:SYNE2/KASH2 LINC complex under tensile forces though not required for the interaction. The disulfide bond is proposed to be conserved in LINC complexes involved in force transmission. As to expression, widely expressed. Highly expressed in heart, lung and muscle. Weakly expressed in fetal heart. Slightly overexpressed in some heart tissues form patients with congenital heart defects.

Its subcellular location is the nucleus inner membrane. The protein localises to the nucleus envelope. The protein resides in the endosome membrane. As a component of the LINC (LInker of Nucleoskeleton and Cytoskeleton) complex, involved in the connection between the nuclear lamina and the cytoskeleton. The nucleocytoplasmic interactions established by the LINC complex play an important role in the transmission of mechanical forces across the nuclear envelope and in nuclear movement and positioning. Specifically, SYNE2 and SUN2 assemble in arrays of transmembrane actin-associated nuclear (TAN) lines which are bound to F-actin cables and couple the nucleus to retrograde actin flow during actin-dependent nuclear movement. Required for interkinetic nuclear migration (INM) and essential for nucleokinesis and centrosome-nucleus coupling during radial neuronal migration in the cerebral cortex and during glial migration. Required for nuclear migration in retinal photoreceptor progenitors implicating association with cytoplasmic dynein-dynactin and kinesin motor complexes, and probably B-type lamins; SUN1 and SUN2 seem to act redundantly. The SUN1/2:KASH5 LINC complex couples telomeres to microtubules during meiosis; SUN1 and SUN2 seem to act at least partial redundantly. Anchors chromosome movement in the prophase of meiosis and is involved in selective gene expression of coding and non-coding RNAs needed for gametogenesis. Required for telomere attachment to nuclear envelope and gametogenesis. May also function on endocytic vesicles as a receptor for RAB5-GDP and participate in the activation of RAB5. The sequence is that of SUN domain-containing protein 2 from Homo sapiens (Human).